A 341-amino-acid polypeptide reads, in one-letter code: Glucokinase (341 aa).

18-23 (GDIGGT) provides a ligand contact to ATP.

The protein belongs to the bacterial glucokinase family.

It localises to the cytoplasm. The catalysed reaction is D-glucose + ATP = D-glucose 6-phosphate + ADP + H(+). This Rhizobium johnstonii (strain DSM 114642 / LMG 32736 / 3841) (Rhizobium leguminosarum bv. viciae) protein is Glucokinase.